The primary structure comprises 264 residues: Adenosylcobinamide-GDP ribazoletransferase (264 aa).

6 consecutive transmembrane segments (helical) span residues 39–59 (IAYA…AILI), 63–83 (ALGL…VLLT), 121–141 (ACAL…LLAL), 148–168 (LALI…LEFL), 201–221 (LLIV…LSVL), and 241–261 (VAGA…LIYA).

This sequence belongs to the CobS family. Requires Mg(2+) as cofactor.

Its subcellular location is the cell inner membrane. It catalyses the reaction alpha-ribazole + adenosylcob(III)inamide-GDP = adenosylcob(III)alamin + GMP + H(+). The catalysed reaction is alpha-ribazole 5'-phosphate + adenosylcob(III)inamide-GDP = adenosylcob(III)alamin 5'-phosphate + GMP + H(+). It functions in the pathway cofactor biosynthesis; adenosylcobalamin biosynthesis; adenosylcobalamin from cob(II)yrinate a,c-diamide: step 7/7. Its function is as follows. Joins adenosylcobinamide-GDP and alpha-ribazole to generate adenosylcobalamin (Ado-cobalamin). Also synthesizes adenosylcobalamin 5'-phosphate from adenosylcobinamide-GDP and alpha-ribazole 5'-phosphate. The chain is Adenosylcobinamide-GDP ribazoletransferase from Azorhizobium caulinodans (strain ATCC 43989 / DSM 5975 / JCM 20966 / LMG 6465 / NBRC 14845 / NCIMB 13405 / ORS 571).